We begin with the raw amino-acid sequence, 479 residues long: MTTRCVMVLGTTSGAGKSWLTAALCRWYARQGLKVAPFKAQNMSNNARVVGGGEIGSAQYFQALAARAVPDVRMNPLLLKPERDTHSQVVLMGQVSAELTAMPWRGRSERVWPQIAQALDALRAENDVVVIEGAGSPAEINLMASDIVNLRVARHADARCLLVTDIDRGGAFAHLYGTWALMPESDRALLRGFVLNKFRGDASLLAPAPQQLQALTGIATVATLPMWREHGLPEEDGVFDDRSHASGAVTRTVAVVAYPRISNLDEFQPLKNVPGVRLAWARTPAELAGADWIVLPGSKHTSGDLAWLRAQGLDRAIAAHAARGGAVLGVCGGLQMLGEALVDPHGIDGNAPGLGLLPLVTVFEREKTVRHRAAVFGQLGGAWASLSNVPVAGYEIHHGQTAIHPQMAQDGHAVMPEGLAWQNARGNVLGLYLHGLFEDAAALHALFGAAAPTLDATFDGLADFIDNHFEAGVLQGLIA.

A GATase cobBQ-type domain is found at 250-442; sequence TRTVAVVAYP…LHGLFEDAAA (193 aa). Cys331 acts as the Nucleophile in catalysis. The active site involves His434.

Belongs to the CobB/CobQ family. CobQ subfamily.

It functions in the pathway cofactor biosynthesis; adenosylcobalamin biosynthesis. Its function is as follows. Catalyzes amidations at positions B, D, E, and G on adenosylcobyrinic A,C-diamide. NH(2) groups are provided by glutamine, and one molecule of ATP is hydrogenolyzed for each amidation. This is Cobyric acid synthase from Variovorax paradoxus (strain S110).